The primary structure comprises 488 residues: Pup--protein ligase (488 aa).

Glu-34 lines the Mg(2+) pocket. An ATP-binding site is contributed by Arg-77. A Mg(2+)-binding site is contributed by Tyr-79. Asp-81 serves as the catalytic Proton acceptor. Glu-87 is a Mg(2+) binding site. ATP is bound by residues Thr-90 and Trp-453.

This sequence belongs to the Pup ligase/Pup deamidase family. Pup-conjugating enzyme subfamily.

The enzyme catalyses ATP + [prokaryotic ubiquitin-like protein]-L-glutamate + [protein]-L-lysine = ADP + phosphate + N(6)-([prokaryotic ubiquitin-like protein]-gamma-L-glutamyl)-[protein]-L-lysine.. Its pathway is protein degradation; proteasomal Pup-dependent pathway. It functions in the pathway protein modification; protein pupylation. Its function is as follows. Catalyzes the covalent attachment of the prokaryotic ubiquitin-like protein modifier Pup to the proteasomal substrate proteins, thereby targeting them for proteasomal degradation. This tagging system is termed pupylation. The ligation reaction involves the side-chain carboxylate of the C-terminal glutamate of Pup and the side-chain amino group of a substrate lysine. This is Pup--protein ligase from Bifidobacterium dentium (strain ATCC 27534 / DSM 20436 / JCM 1195 / Bd1).